A 244-amino-acid polypeptide reads, in one-letter code: Lactate utilization protein A (244 aa).

This sequence belongs to the LutA/YkgE family.

In terms of biological role, is involved in L-lactate degradation and allows cells to grow with lactate as the sole carbon source. The protein is Lactate utilization protein A of Halalkalibacterium halodurans (strain ATCC BAA-125 / DSM 18197 / FERM 7344 / JCM 9153 / C-125) (Bacillus halodurans).